A 358-amino-acid polypeptide reads, in one-letter code: Ion-translocating oxidoreductase complex subunit D (358 aa).

Helical transmembrane passes span 19 to 39 (IMLWVILAMMPAFFTQIYYFG), 41 to 61 (GVVLQSALAIGTAIIAEFIAI), 79 to 99 (LTALILAMAIPPYAPYWVIII), and 125 to 145 (IGYVILLISFPLQMTTWMPPI). Thr-186 carries the FMN phosphoryl threonine modification. Helical transmembrane passes span 220-240 (FAQGWWQINVAFLAGGIFLIL), 248-268 (IPVAMLVTFFCLATATAFTGF), 271-291 (LSAISQLVSGAMMFGAFFIAT), 297-317 (SITPRGKIIFGALVGLFVYLI), and 321-341 (GNYPDGVAFAILLSNICVPLI).

It belongs to the NqrB/RnfD family. As to quaternary structure, the complex is composed of six subunits: RnfA, RnfB, RnfC, RnfD, RnfE and RnfG. It depends on FMN as a cofactor.

It is found in the cell inner membrane. Its function is as follows. Part of a membrane-bound complex that couples electron transfer with translocation of ions across the membrane. The sequence is that of Ion-translocating oxidoreductase complex subunit D from Haemophilus influenzae (strain PittGG).